Here is a 240-residue protein sequence, read N- to C-terminus: UDP-2,3-diacylglucosamine hydrolase (240 aa).

Mn(2+)-binding residues include aspartate 8, histidine 10, aspartate 41, asparagine 79, and histidine 114. Asparagine 79–arginine 80 is a binding site for substrate. Substrate is bound by residues aspartate 122, serine 160, asparagine 164, lysine 167, and histidine 195. Mn(2+)-binding residues include histidine 195 and histidine 197.

It belongs to the LpxH family. It depends on Mn(2+) as a cofactor.

The protein localises to the cell inner membrane. It catalyses the reaction UDP-2-N,3-O-bis[(3R)-3-hydroxytetradecanoyl]-alpha-D-glucosamine + H2O = 2-N,3-O-bis[(3R)-3-hydroxytetradecanoyl]-alpha-D-glucosaminyl 1-phosphate + UMP + 2 H(+). It participates in glycolipid biosynthesis; lipid IV(A) biosynthesis; lipid IV(A) from (3R)-3-hydroxytetradecanoyl-[acyl-carrier-protein] and UDP-N-acetyl-alpha-D-glucosamine: step 4/6. In terms of biological role, hydrolyzes the pyrophosphate bond of UDP-2,3-diacylglucosamine to yield 2,3-diacylglucosamine 1-phosphate (lipid X) and UMP by catalyzing the attack of water at the alpha-P atom. Involved in the biosynthesis of lipid A, a phosphorylated glycolipid that anchors the lipopolysaccharide to the outer membrane of the cell. In Escherichia coli O7:K1 (strain IAI39 / ExPEC), this protein is UDP-2,3-diacylglucosamine hydrolase.